The following is a 238-amino-acid chain: N-(5'-phosphoribosyl)anthranilate isomerase (238 aa).

The protein belongs to the TrpF family.

It catalyses the reaction N-(5-phospho-beta-D-ribosyl)anthranilate = 1-(2-carboxyphenylamino)-1-deoxy-D-ribulose 5-phosphate. It functions in the pathway amino-acid biosynthesis; L-tryptophan biosynthesis; L-tryptophan from chorismate: step 3/5. The sequence is that of N-(5'-phosphoribosyl)anthranilate isomerase from Methanosarcina acetivorans (strain ATCC 35395 / DSM 2834 / JCM 12185 / C2A).